The following is a 293-amino-acid chain: MVTTVEMLTTWNPVTVSLVSPVIIYWVASAFFGFLHYIELPVFEKYRIHPPEEIARRNRVPQMAVVKAVLFQQLCEVVVGIALAMFEGYPEPIDEAKQMLRYEAFFSKNLPALLQVAPFAPKLAYNFIVPAFQYFFAFFIIDSWQYFWHRYLHYNKKLYNMIHAHHHRLQVPYAMGALYNHPFEGLILDTFGAGVAYLAAGLSPQQAVIFFTLSTLKTVDDHCGYVFPYDPLQMFFANNARYHDLHHQPYGFQKNFSQPFFTFWDHVLGTYMPPKSETPYEKKQKAKNAKKVN.

The next 3 helical transmembrane spans lie at 18 to 38, 68 to 88, and 127 to 147; these read LVSP…LHYI, AVLF…MFEG, and FIVP…WQYF. Positions 136–270 constitute a Fatty acid hydroxylase domain; it reads FAFFIIDSWQ…FTFWDHVLGT (135 aa).

It belongs to the sterol desaturase family.

The protein localises to the endoplasmic reticulum membrane. It functions in the pathway membrane lipid metabolism; sphingolipid biosynthesis. Functionally, required for hydroxylation of C-4 in the sphingoid moiety of ceramide. Involved in the response to syringomycin. This chain is Sphingolipid C4-hydroxylase sur2 (sur2), found in Schizosaccharomyces pombe (strain 972 / ATCC 24843) (Fission yeast).